Here is a 148-residue protein sequence, read N- to C-terminus: Probable calcium-binding protein CML7 (148 aa).

EF-hand domains are found at residues 9–44 (EQVA…LGGN), 80–115 (PFDR…IGEK), and 116–148 (LEPH…IVAK). Ca(2+) contacts are provided by Asp-22, Asp-24, Asp-26, Arg-28, Glu-33, Asp-93, Asp-95, Ser-97, Thr-99, and Asp-104.

In terms of biological role, potential calcium sensor. In Oryza sativa subsp. japonica (Rice), this protein is Probable calcium-binding protein CML7 (CML7).